Here is a 155-residue protein sequence, read N- to C-terminus: Large ribosomal subunit protein eL24 (155 aa).

Positions 94 to 129 (RSLKPEVRKAQRDEKKKADKEKKKADKAARKSEKAK) are enriched in basic and acidic residues. The disordered stretch occupies residues 94–155 (RSLKPEVRKA…AFQKVAATSR (62 aa)).

The protein belongs to the eukaryotic ribosomal protein eL24 family.

The protein is Large ribosomal subunit protein eL24 (RPL24) of Kluyveromyces lactis (strain ATCC 8585 / CBS 2359 / DSM 70799 / NBRC 1267 / NRRL Y-1140 / WM37) (Yeast).